Consider the following 322-residue polypeptide: Ribose 1,5-bisphosphate isomerase (322 aa).

Substrate is bound by residues 20 to 23 and R63; that span reads RGAG. The Proton acceptor role is filled by C133. Residue 135–137 coordinates substrate; sequence SKA. D202 acts as the Proton donor in catalysis. Residues 212–213 and K238 contribute to the substrate site; that span reads NK.

It belongs to the eIF-2B alpha/beta/delta subunits family. R15P isomerase subfamily. Homohexamer; trimer of dimers.

It catalyses the reaction alpha-D-ribose 1,5-bisphosphate = D-ribulose 1,5-bisphosphate. Is highly activated in the presence of AMP, with an increase of &gt;40-fold in activity levels. Among other nucleotides, isomerase activity is slightly increased in the presence of GMP, but CMP, UMP, TMP, and NAD(+) have no effect; therefore, AMP is likely the major activator of R15P isomerase in vivo. To a lesser extent, various compounds with an adenosyl moiety, such as dAMP, adenosine, or methylthioadenosine, can also act as activators. The regulation of this enzyme by AMP prevents excess degradation of intracellular AMP by the archaeal AMP degradation pathway. Functionally, catalyzes the isomerization of ribose 1,5-bisphosphate (R15P) to ribulose 1,5-bisphosphate (RuBP), the CO(2) acceptor and substrate for RubisCO. Only accepts the alpha-anomer of D-ribose 1,5-bisphosphate as substrate, being inactive on the beta-anomer. Displays a strict substrate specificity, since other phosphorylated sugars such as R5P, ribose, G16P, G6P, G1P, FBP, F6P, and PRPP, are not substrates. Functions in an archaeal AMP degradation pathway, together with AMP phosphorylase and RubisCO. This is Ribose 1,5-bisphosphate isomerase from Thermococcus kodakarensis (strain ATCC BAA-918 / JCM 12380 / KOD1) (Pyrococcus kodakaraensis (strain KOD1)).